The chain runs to 129 residues: Small ribosomal subunit protein uS11 (129 aa).

Belongs to the universal ribosomal protein uS11 family. As to quaternary structure, part of the 30S ribosomal subunit. Interacts with proteins S7 and S18. Binds to IF-3.

In terms of biological role, located on the platform of the 30S subunit, it bridges several disparate RNA helices of the 16S rRNA. Forms part of the Shine-Dalgarno cleft in the 70S ribosome. The protein is Small ribosomal subunit protein uS11 of Bartonella tribocorum (strain CIP 105476 / IBS 506).